The sequence spans 228 residues: MASEELQKDLEEVKVLLEKATRKRVRDALTAEKSKIETEIKNKMQQKSQKKAELLDNEKPAAVVAPITTGYTVKISNYGWDQSDKFVKIYITLSGVHQVPTENVQVHFTERSFDLLVKNLNGKSYSMIVNNLLKPISVEGSSKKVKTDTVLILCRKKVENTRWDYLTQVEKECKEKEKPSYDTETDPSEGLMNVLKKIYEDGDDDMKRTINKAWVESREKQAKGDTEF.

Residue Ala2 is modified to N-acetylalanine. The interaction with SIAH1 stretch occupies residues 2–80 (ASEELQKDLE…YTVKISNYGW (79 aa)). Ser3 carries the post-translational modification Phosphoserine. Residues Lys8 and Lys19 each carry the N6-acetyllysine modification. The residue at position 34 (Ser34) is a Phosphoserine. One can recognise a CS domain in the interval 73-167 (VKISNYGWDQ…VENTRWDYLT (95 aa)). The interaction with SKP1 stretch occupies residues 73–228 (VKISNYGWDQ…EKQAKGDTEF (156 aa)). N6-acetyllysine occurs at positions 85 and 118. The interaction with S100A6 stretch occupies residues 154–228 (CRKKVENTRW…EKQAKGDTEF (75 aa)). The 61-residue stretch at 168–228 (QVEKECKEKE…EKQAKGDTEF (61 aa)) folds into the SGS domain.

As to quaternary structure, component of some large E3 complex at least composed of UBE2D1, SIAH1, CACYBP/SIP, SKP1, APC and TBL1X. Interacts directly with SIAH1, SIAH2 and SKP1. Interacts with protein of the S100 family S100A1, S100A6, S100B, S100P and S100A12 in a calcium-dependent manner. Post-translationally, phosphorylated on serine residues. Phosphorylated upon induction by RA or at high calcium concentrations.

It is found in the nucleus. It localises to the cytoplasm. Functionally, may be involved in calcium-dependent ubiquitination and subsequent proteasomal degradation of target proteins. Probably serves as a molecular bridge in ubiquitin E3 complexes. Participates in the ubiquitin-mediated degradation of beta-catenin (CTNNB1). In Macaca fascicularis (Crab-eating macaque), this protein is Calcyclin-binding protein (CACYBP).